We begin with the raw amino-acid sequence, 639 residues long: DNA gyrase subunit B (639 aa).

Residues 392–402 (QAEELTRRKSA) are compositionally biased toward basic and acidic residues. The disordered stretch occupies residues 392–416 (QAEELTRRKSALESTSLPGKLADCQ). The Toprim domain occupies 423–537 (SELFIVEGDS…AGYVYAAQPP (115 aa)). 3 residues coordinate Mg(2+): E429, D502, and D504. Residue K624 forms a Glycyl lysine isopeptide (Lys-Gly) (interchain with G-Cter in SAMP2) linkage.

The protein belongs to the type II topoisomerase GyrB family. Heterotetramer, composed of two GyrA and two GyrB chains. In the heterotetramer, GyrA contains the active site tyrosine that forms a transient covalent intermediate with DNA, while GyrB binds cofactors and catalyzes ATP hydrolysis. The cofactor is Mg(2+). Mn(2+) is required as a cofactor. It depends on Ca(2+) as a cofactor.

It localises to the cytoplasm. It catalyses the reaction ATP-dependent breakage, passage and rejoining of double-stranded DNA.. A type II topoisomerase that negatively supercoils closed circular double-stranded (ds) DNA in an ATP-dependent manner to modulate DNA topology and maintain chromosomes in an underwound state. Negative supercoiling favors strand separation, and DNA replication, transcription, recombination and repair, all of which involve strand separation. Also able to catalyze the interconversion of other topological isomers of dsDNA rings, including catenanes and knotted rings. Type II topoisomerases break and join 2 DNA strands simultaneously in an ATP-dependent manner. This Haloferax volcanii (strain ATCC 29605 / DSM 3757 / JCM 8879 / NBRC 14742 / NCIMB 2012 / VKM B-1768 / DS2) (Halobacterium volcanii) protein is DNA gyrase subunit B.